Reading from the N-terminus, the 501-residue chain is Sugar phosphate exchanger 3 (501 aa).

A helical membrane pass occupies residues 20 to 40; sequence CTHHHIVVFLLTFFSYSLLHA. Asn62 carries N-linked (GlcNAc...) asparagine glycosylation. 5 helical membrane-spanning segments follow: residues 87–107, 119–139, 153–173, 183–203, and 214–234; these read TLFLGTLDTIFLFSYAVGLFV, WVLSFGMCSSALVVFFFGTLT, LWVVNGLLQSTGWPCVVAVMG, FVFGLWSACASVGNILGAFLA, and AFLVTASVQFAGGVIVFCGLL. The N-linked (GlcNAc...) asparagine glycan is linked to Asn273. 6 consecutive transmembrane segments (helical) span residues 298-320, 340-360, 364-384, 393-413, 435-455, and 459-479; these read GVVLYSLAYACLKLVNYSFFFWL, IWYDVGGIIGGTIQGLISDVL, APVLAISLLFAVGSLFGYSRS, VIMAITGFFIGGPSNMISSAI, GIVDGTGSIGAAVGQYLVSLI, and LGWMWVFYFFILMASSTILFI.

Belongs to the major facilitator superfamily. Organophosphate:Pi antiporter (OPA) (TC 2.A.1.4) family.

It localises to the endoplasmic reticulum membrane. The protein resides in the lysosome membrane. Unlike the other SLC37 members, seems to lack glucose-6-phosphate antiporter activity. The sequence is that of Sugar phosphate exchanger 3 (SLC37A3) from Gallus gallus (Chicken).